The following is a 240-amino-acid chain: Probable septum site-determining protein MinC (240 aa).

It belongs to the MinC family. In terms of assembly, interacts with MinD and FtsZ.

Its function is as follows. Cell division inhibitor that blocks the formation of polar Z ring septums. Rapidly oscillates between the poles of the cell to destabilize FtsZ filaments that have formed before they mature into polar Z rings. Prevents FtsZ polymerization. This is Probable septum site-determining protein MinC from Acinetobacter baumannii (strain ATCC 17978 / DSM 105126 / CIP 53.77 / LMG 1025 / NCDC KC755 / 5377).